The sequence spans 1464 residues: DNA polymerase III PolC-type (1464 aa).

The 157-residue stretch at 426–582 folds into the Exonuclease domain; sequence YVVFDVETTG…YDAEATGRLL (157 aa).

Belongs to the DNA polymerase type-C family. PolC subfamily.

The protein localises to the cytoplasm. It catalyses the reaction DNA(n) + a 2'-deoxyribonucleoside 5'-triphosphate = DNA(n+1) + diphosphate. Required for replicative DNA synthesis. This DNA polymerase also exhibits 3' to 5' exonuclease activity. This chain is DNA polymerase III PolC-type, found in Streptococcus thermophilus (strain ATCC BAA-491 / LMD-9).